The sequence spans 360 residues: G-box-binding factor 2 (360 aa).

Positions 1 to 16 are enriched in polar residues; it reads MGSNEEGNPTNNSDKP. Disordered stretches follow at residues 1–26 and 150–275; these read MGSN…EQSN and KVGS…AETE. Low complexity predominate over residues 164–184; the sequence is SQSSENDGSSNGSDGNTTGGE. A compositionally biased stretch (polar residues) spans 198–208; the sequence is TGERPSSQNSL. The span at 246–264 shows a compositional bias: basic and acidic residues; the sequence is NEKEVKREKRKQSNRESAR. Residues 249 to 312 form the bZIP domain; it reads EVKREKRKQS…EKLRLENEAI (64 aa). Residues 251–270 form a basic motif region; it reads KREKRKQSNRESARRSRLRK. The interval 277–312 is leucine-zipper; sequence LSVKVDALVAENMSLRSKLGQLNNESEKLRLENEAI. The segment covering 335-352 has biased composition (polar residues); the sequence is NSVSGSKTVQHQLLNASP. Residues 335–360 form a disordered region; that stretch reads NSVSGSKTVQHQLLNASPITDPVAAS.

It belongs to the bZIP family. In terms of assembly, DNA-binding heterodimer. Interacts with GBF4. Interacts with BZIP16 and BZIP68. Found in both light and dark grown leaves.

It localises to the nucleus. Its function is as follows. Binds to the G-box motif (5'-CCACGTGG-3') of the rbcS-1A gene promoter. G-box and G-box-like motifs are cis-acting elements defined in promoters of certain plant genes which are regulated by such diverse stimuli as light-induction or hormone control. GBF2 is found to bind asymmetrically to the G-box. This Arabidopsis thaliana (Mouse-ear cress) protein is G-box-binding factor 2 (GBF2).